The primary structure comprises 500 residues: Aspartyl/glutamyl-tRNA(Asn/Gln) amidotransferase subunit B (500 aa).

The protein belongs to the GatB/GatE family. GatB subfamily. In terms of assembly, heterotrimer of A, B and C subunits.

The catalysed reaction is L-glutamyl-tRNA(Gln) + L-glutamine + ATP + H2O = L-glutaminyl-tRNA(Gln) + L-glutamate + ADP + phosphate + H(+). It catalyses the reaction L-aspartyl-tRNA(Asn) + L-glutamine + ATP + H2O = L-asparaginyl-tRNA(Asn) + L-glutamate + ADP + phosphate + 2 H(+). Allows the formation of correctly charged Asn-tRNA(Asn) or Gln-tRNA(Gln) through the transamidation of misacylated Asp-tRNA(Asn) or Glu-tRNA(Gln) in organisms which lack either or both of asparaginyl-tRNA or glutaminyl-tRNA synthetases. The reaction takes place in the presence of glutamine and ATP through an activated phospho-Asp-tRNA(Asn) or phospho-Glu-tRNA(Gln). This Brucella melitensis biotype 2 (strain ATCC 23457) protein is Aspartyl/glutamyl-tRNA(Asn/Gln) amidotransferase subunit B.